The sequence spans 100 residues: Transcription and mRNA export factor SUS1 (100 aa).

This sequence belongs to the ENY2 family. Component of the nuclear pore complex (NPC)-associated TREX-2 complex (transcription and export complex 2), composed of at least SUS1, SAC3, THP1, SEM1, and CDC31. TREX-2 contains 2 SUS1 chains. The TREX-2 complex interacts with the nucleoporin NUP1. Component of the 1.8 MDa SAGA transcription coactivator-HAT complex. SAGA is built of 5 distinct domains with specialized functions. Within the SAGA complex, SUS1, SGF11, SGF73 and UBP8 form an additional subcomplex of SAGA called the DUB module (deubiquitination module). Interacts directly with THP1, SAC3, SGF11, and with the RNA polymerase II.

The protein localises to the nucleus. Its subcellular location is the nucleoplasm. It is found in the cytoplasm. The protein resides in the P-body. Functionally, involved in mRNA export coupled transcription activation by association with both the TREX-2 and the SAGA complexes. At the promoters, SAGA is required for recruitment of the basal transcription machinery. It influences RNA polymerase II transcriptional activity through different activities such as TBP interaction and promoter selectivity, interaction with transcription activators, and chromatin modification through histone acetylation and deubiquitination. Within the SAGA complex, participates in a subcomplex required for deubiquitination of H2B and for the maintenance of steady-state H3 methylation levels. The TREX-2 complex functions in docking export-competent ribonucleoprotein particles (mRNPs) to the nuclear entrance of the nuclear pore complex (nuclear basket). TREX-2 participates in mRNA export and accurate chromatin positioning in the nucleus by tethering genes to the nuclear periphery. May also be involved in cytoplasmic mRNA decay by interaction with components of P-bodies. The sequence is that of Transcription and mRNA export factor SUS1 from Cryptococcus neoformans var. neoformans serotype D (strain B-3501A) (Filobasidiella neoformans).